Reading from the N-terminus, the 200-residue chain is Protein GrpE (200 aa).

The segment covering 1–25 (MMSKQNKKDWKKFKDEHKEEHKVEN) has biased composition (basic and acidic residues). The segment at 1–52 (MMSKQNKKDWKKFKDEHKEEHKVENEILEEETDEESQHQEPALGHPSYTALE) is disordered.

It belongs to the GrpE family. In terms of assembly, homodimer.

It is found in the cytoplasm. Its function is as follows. Participates actively in the response to hyperosmotic and heat shock by preventing the aggregation of stress-denatured proteins, in association with DnaK and GrpE. It is the nucleotide exchange factor for DnaK and may function as a thermosensor. Unfolded proteins bind initially to DnaJ; upon interaction with the DnaJ-bound protein, DnaK hydrolyzes its bound ATP, resulting in the formation of a stable complex. GrpE releases ADP from DnaK; ATP binding to DnaK triggers the release of the substrate protein, thus completing the reaction cycle. Several rounds of ATP-dependent interactions between DnaJ, DnaK and GrpE are required for fully efficient folding. This Legionella pneumophila subsp. pneumophila (strain Philadelphia 1 / ATCC 33152 / DSM 7513) protein is Protein GrpE.